The sequence spans 130 residues: Small ribosomal subunit protein uS8 (130 aa).

Belongs to the universal ribosomal protein uS8 family. As to quaternary structure, part of the 30S ribosomal subunit. Contacts proteins S5 and S12.

In terms of biological role, one of the primary rRNA binding proteins, it binds directly to 16S rRNA central domain where it helps coordinate assembly of the platform of the 30S subunit. The polypeptide is Small ribosomal subunit protein uS8 (Hahella chejuensis (strain KCTC 2396)).